A 210-amino-acid chain; its full sequence is Nucleoside triphosphate pyrophosphatase (210 aa).

Catalysis depends on D80, which acts as the Proton acceptor.

The protein belongs to the Maf family. Requires a divalent metal cation as cofactor.

Its subcellular location is the cytoplasm. It carries out the reaction a ribonucleoside 5'-triphosphate + H2O = a ribonucleoside 5'-phosphate + diphosphate + H(+). The enzyme catalyses a 2'-deoxyribonucleoside 5'-triphosphate + H2O = a 2'-deoxyribonucleoside 5'-phosphate + diphosphate + H(+). Functionally, nucleoside triphosphate pyrophosphatase. May have a dual role in cell division arrest and in preventing the incorporation of modified nucleotides into cellular nucleic acids. The chain is Nucleoside triphosphate pyrophosphatase from Mycobacterium sp. (strain JLS).